The chain runs to 556 residues: MDPKAEGNGENITETAAGNVETSDFVNLKRQKREGVNSTGMSEIDMTGSQETPEHNMHGSPTHTDDLGPRLDADMLDSQSSHVSSSAQGNRSEVENELSNLFAKMALPGHDRRTDEYILVRQTGQDKFAGTTKCNLDHLPTKAEFNASCRLYRDGVGNYYPPPLAFERIDIPEQLAAQLHNLEPREQSKQCFQYKLEVWNRAHAEMGITGTDIFYQTDKNIKLDRNYKLRPEDRYIQTEKYGRREIQKRYEHQFQAGSLLPDILIKTPQNDIHFSYRFAGDAYANKRFEEFERAIKTKYGSDTEIKLKSKSGIMHDSKYLESWERGSADIRFAEFAGENRAHNKQFPAATVNMGRQPDGQGGMTRDRHVSVDYLLQNLPNSPWTQALKEGKLWDRVQVLARDGNRYMSPSRLEYSDPEHFTQLMDQVGLPVSMGRQSHANSVKFEQFDRQAAVIVADGPNLREVPDLSPEKLQQLSQKDVLIADRNEKGQRTGTYTNVVEYERLMMKLPSDAAQLLAEPSDRYSRAFVRPEPALPPISDSRRTYESRPRGPTVNSL.

Disordered regions lie at residues 1–95 and 527–556; these read MDPK…SEVE and FVRP…VNSL. Composition is skewed to polar residues over residues 10–25 and 36–51; these read ENIT…TSDF and VNST…GSQE. 2 stretches are compositionally biased toward basic and acidic residues: residues 52–73 and 539–548; these read TPEH…RLDA and DSRRTYESRP.

As to quaternary structure, interacts with host VIP2 that promotes T-DNA integration into the host genome. Forms a complex made of virE2 and host proteins VIP1 and VBF. Forms heterodimers with the chaperone protein virE1 that prevent virE2 anarchic homopolymerization. Interacts with A.thaliana VIP1 that mediates its translocation to the host nucleus. Forms a complex made of VirE2, host VIP1 and VIP2 and single-stranded DNA (ssDNA).

The protein localises to the secreted. Its subcellular location is the host nucleus. Involved in DNA transformation; mediates the nuclear uptake of single-stranded DNA copies of the transferred DNA (T-DNA) element. Binds single-stranded but not double-stranded DNA regardless of nucleotide sequence composition. The polypeptide is Single-strand DNA-binding protein (virE2) (Agrobacterium fabrum (strain C58 / ATCC 33970) (Agrobacterium tumefaciens (strain C58))).